The following is a 217-amino-acid chain: tRNA (guanine-N(7)-)-methyltransferase (217 aa).

Glu-44, Glu-69, Asp-96, and Asp-118 together coordinate S-adenosyl-L-methionine. Residue Asp-118 is part of the active site. Lys-122 is a binding site for substrate. The tract at residues 124 to 129 (RHEKRR) is interaction with RNA. Substrate-binding positions include Asp-154 and 191 to 194 (TEYE).

The protein belongs to the class I-like SAM-binding methyltransferase superfamily. TrmB family.

The catalysed reaction is guanosine(46) in tRNA + S-adenosyl-L-methionine = N(7)-methylguanosine(46) in tRNA + S-adenosyl-L-homocysteine. The protein operates within tRNA modification; N(7)-methylguanine-tRNA biosynthesis. Functionally, catalyzes the formation of N(7)-methylguanine at position 46 (m7G46) in tRNA. The sequence is that of tRNA (guanine-N(7)-)-methyltransferase from Bacillus velezensis (strain DSM 23117 / BGSC 10A6 / LMG 26770 / FZB42) (Bacillus amyloliquefaciens subsp. plantarum).